Here is a 241-residue protein sequence, read N- to C-terminus: ATP phosphoribosyltransferase (241 aa).

The protein belongs to the ATP phosphoribosyltransferase family. Short subfamily. Heteromultimer composed of HisG and HisZ subunits.

The protein localises to the cytoplasm. It carries out the reaction 1-(5-phospho-beta-D-ribosyl)-ATP + diphosphate = 5-phospho-alpha-D-ribose 1-diphosphate + ATP. It functions in the pathway amino-acid biosynthesis; L-histidine biosynthesis; L-histidine from 5-phospho-alpha-D-ribose 1-diphosphate: step 1/9. In terms of biological role, catalyzes the condensation of ATP and 5-phosphoribose 1-diphosphate to form N'-(5'-phosphoribosyl)-ATP (PR-ATP). Has a crucial role in the pathway because the rate of histidine biosynthesis seems to be controlled primarily by regulation of HisG enzymatic activity. This Gluconobacter oxydans (strain 621H) (Gluconobacter suboxydans) protein is ATP phosphoribosyltransferase.